We begin with the raw amino-acid sequence, 337 residues long: Alanine racemase (337 aa).

Catalysis depends on lysine 33, which acts as the Proton acceptor; specific for D-alanine. At lysine 33 the chain carries N6-(pyridoxal phosphate)lysine. Residue arginine 118 coordinates substrate. Tyrosine 246 serves as the catalytic Proton acceptor; specific for L-alanine. Methionine 292 is a substrate binding site.

It belongs to the alanine racemase family. Pyridoxal 5'-phosphate serves as cofactor.

The enzyme catalyses L-alanine = D-alanine. Its pathway is amino-acid biosynthesis; D-alanine biosynthesis; D-alanine from L-alanine: step 1/1. In terms of biological role, catalyzes the interconversion of L-alanine and D-alanine. May also act on other amino acids. The protein is Alanine racemase (alr) of Campylobacter concisus (strain 13826).